The primary structure comprises 479 residues: Cell division protein FtsA (479 aa).

The tract at residues 417 to 458 (QGRQTERKENEQRDNTDRQREDTPKQTVKKKEKTGPSFGDKL) is disordered. Positions 420–440 (QTERKENEQRDNTDRQREDTP) are enriched in basic and acidic residues.

This sequence belongs to the FtsA/MreB family. As to quaternary structure, self-interacts. Interacts with FtsZ.

It localises to the cell inner membrane. In terms of biological role, cell division protein that is involved in the assembly of the Z ring. May serve as a membrane anchor for the Z ring. The chain is Cell division protein FtsA from Porphyromonas gingivalis (strain ATCC BAA-308 / W83).